The following is a 269-amino-acid chain: Undecaprenyl-diphosphatase (269 aa).

Helical transmembrane passes span 43–63 (KGKV…CWEY), 82–102 (FILN…LLHG), 108–128 (LFSS…ILLV), 188–208 (ATEF…FYDV), 222–242 (MFAV…KTLI), and 249–269 (DFKG…AYYW).

It belongs to the UppP family.

Its subcellular location is the cell inner membrane. The catalysed reaction is di-trans,octa-cis-undecaprenyl diphosphate + H2O = di-trans,octa-cis-undecaprenyl phosphate + phosphate + H(+). Functionally, catalyzes the dephosphorylation of undecaprenyl diphosphate (UPP). Confers resistance to bacitracin. The polypeptide is Undecaprenyl-diphosphatase (Methylobacillus flagellatus (strain ATCC 51484 / DSM 6875 / VKM B-1610 / KT)).